We begin with the raw amino-acid sequence, 454 residues long: CCA-adding enzyme (454 aa).

ATP-binding residues include S53 and K56. CTP-binding residues include S53 and K56. D65, D67, and D119 together coordinate Mg(2+). Positions 142, 161, and 170 each coordinate ATP. Residues H142, K161, and Y170 each contribute to the CTP site.

Belongs to the tRNA nucleotidyltransferase/poly(A) polymerase family. Archaeal CCA-adding enzyme subfamily. As to quaternary structure, homodimer. Mg(2+) is required as a cofactor.

The catalysed reaction is a tRNA precursor + 2 CTP + ATP = a tRNA with a 3' CCA end + 3 diphosphate. It carries out the reaction a tRNA with a 3' CCA end + 2 CTP + ATP = a tRNA with a 3' CCACCA end + 3 diphosphate. Functionally, catalyzes the addition and repair of the essential 3'-terminal CCA sequence in tRNAs without using a nucleic acid template. Adds these three nucleotides in the order of C, C, and A to the tRNA nucleotide-73, using CTP and ATP as substrates and producing inorganic pyrophosphate. tRNA 3'-terminal CCA addition is required both for tRNA processing and repair. Also involved in tRNA surveillance by mediating tandem CCA addition to generate a CCACCA at the 3' terminus of unstable tRNAs. While stable tRNAs receive only 3'-terminal CCA, unstable tRNAs are marked with CCACCA and rapidly degraded. The sequence is that of CCA-adding enzyme from Thermococcus gammatolerans (strain DSM 15229 / JCM 11827 / EJ3).